Reading from the N-terminus, the 164-residue chain is Protein-export protein SecB (164 aa).

This sequence belongs to the SecB family. As to quaternary structure, homotetramer, a dimer of dimers. One homotetramer interacts with 1 SecA dimer.

Its subcellular location is the cytoplasm. Its function is as follows. One of the proteins required for the normal export of preproteins out of the cell cytoplasm. It is a molecular chaperone that binds to a subset of precursor proteins, maintaining them in a translocation-competent state. It also specifically binds to its receptor SecA. This is Protein-export protein SecB from Chromohalobacter salexigens (strain ATCC BAA-138 / DSM 3043 / CIP 106854 / NCIMB 13768 / 1H11).